We begin with the raw amino-acid sequence, 270 residues long: tRNA pseudouridine synthase A (270 aa).

Asp-52 acts as the Nucleophile in catalysis. Tyr-110 serves as a coordination point for substrate.

Belongs to the tRNA pseudouridine synthase TruA family. As to quaternary structure, homodimer.

The enzyme catalyses uridine(38/39/40) in tRNA = pseudouridine(38/39/40) in tRNA. Its function is as follows. Formation of pseudouridine at positions 38, 39 and 40 in the anticodon stem and loop of transfer RNAs. In Paraburkholderia phytofirmans (strain DSM 17436 / LMG 22146 / PsJN) (Burkholderia phytofirmans), this protein is tRNA pseudouridine synthase A.